A 393-amino-acid polypeptide reads, in one-letter code: S-adenosylmethionine synthase (393 aa).

Histidine 16 contacts ATP. Aspartate 18 contributes to the Mg(2+) binding site. K(+) is bound at residue glutamate 44. 2 residues coordinate L-methionine: glutamate 57 and glutamine 100. A flexible loop region spans residues 100–110; that stretch reads QSNDIAQGVDH. Residues 167–169, 238–239, aspartate 247, 253–254, alanine 270, and lysine 274 each bind ATP; these read DAK, RF, and RK. Aspartate 247 provides a ligand contact to L-methionine. L-methionine is bound at residue lysine 278.

It belongs to the AdoMet synthase family. In terms of assembly, homotetramer; dimer of dimers. The cofactor is Mg(2+). It depends on K(+) as a cofactor.

It localises to the cytoplasm. The enzyme catalyses L-methionine + ATP + H2O = S-adenosyl-L-methionine + phosphate + diphosphate. The protein operates within amino-acid biosynthesis; S-adenosyl-L-methionine biosynthesis; S-adenosyl-L-methionine from L-methionine: step 1/1. In terms of biological role, catalyzes the formation of S-adenosylmethionine (AdoMet) from methionine and ATP. The overall synthetic reaction is composed of two sequential steps, AdoMet formation and the subsequent tripolyphosphate hydrolysis which occurs prior to release of AdoMet from the enzyme. The protein is S-adenosylmethionine synthase of Acidovorax sp. (strain JS42).